The sequence spans 193 residues: Crossover junction endodeoxyribonuclease RuvC (193 aa).

Active-site residues include Asp-7, Glu-68, and Asp-141. Residues Asp-7, Glu-68, and Asp-141 each coordinate Mg(2+).

This sequence belongs to the RuvC family. In terms of assembly, homodimer which binds Holliday junction (HJ) DNA. The HJ becomes 2-fold symmetrical on binding to RuvC with unstacked arms; it has a different conformation from HJ DNA in complex with RuvA. In the full resolvosome a probable DNA-RuvA(4)-RuvB(12)-RuvC(2) complex forms which resolves the HJ. It depends on Mg(2+) as a cofactor.

The protein resides in the cytoplasm. It catalyses the reaction Endonucleolytic cleavage at a junction such as a reciprocal single-stranded crossover between two homologous DNA duplexes (Holliday junction).. Functionally, the RuvA-RuvB-RuvC complex processes Holliday junction (HJ) DNA during genetic recombination and DNA repair. Endonuclease that resolves HJ intermediates. Cleaves cruciform DNA by making single-stranded nicks across the HJ at symmetrical positions within the homologous arms, yielding a 5'-phosphate and a 3'-hydroxyl group; requires a central core of homology in the junction. The consensus cleavage sequence is 5'-(A/T)TT(C/G)-3'. Cleavage occurs on the 3'-side of the TT dinucleotide at the point of strand exchange. HJ branch migration catalyzed by RuvA-RuvB allows RuvC to scan DNA until it finds its consensus sequence, where it cleaves and resolves the cruciform DNA. This Renibacterium salmoninarum (strain ATCC 33209 / DSM 20767 / JCM 11484 / NBRC 15589 / NCIMB 2235) protein is Crossover junction endodeoxyribonuclease RuvC.